Consider the following 136-residue polypeptide: Small ribosomal subunit protein uS11c (136 aa).

The segment at 1 to 22 (MAKAIPKKGSRGRIGSRKSTRK) is disordered.

This sequence belongs to the universal ribosomal protein uS11 family. Part of the 30S ribosomal subunit.

The protein localises to the plastid. Its subcellular location is the chloroplast. The sequence is that of Small ribosomal subunit protein uS11c from Lactuca sativa (Garden lettuce).